A 141-amino-acid chain; its full sequence is ATP synthase epsilon chain (141 aa).

It belongs to the ATPase epsilon chain family. As to quaternary structure, F-type ATPases have 2 components, CF(1) - the catalytic core - and CF(0) - the membrane proton channel. CF(1) has five subunits: alpha(3), beta(3), gamma(1), delta(1), epsilon(1). CF(0) has three main subunits: a, b and c.

The protein localises to the cell inner membrane. Produces ATP from ADP in the presence of a proton gradient across the membrane. This chain is ATP synthase epsilon chain (atpC), found in Acidithiobacillus ferridurans.